We begin with the raw amino-acid sequence, 215 residues long: Thiamine-phosphate synthase (215 aa).

4-amino-2-methyl-5-(diphosphooxymethyl)pyrimidine-binding positions include 37–41 (QLRIK) and asparagine 69. Residues aspartate 70 and aspartate 89 each contribute to the Mg(2+) site. Residue serine 108 participates in 4-amino-2-methyl-5-(diphosphooxymethyl)pyrimidine binding. 134–136 (TQT) provides a ligand contact to 2-[(2R,5Z)-2-carboxy-4-methylthiazol-5(2H)-ylidene]ethyl phosphate. Position 137 (lysine 137) interacts with 4-amino-2-methyl-5-(diphosphooxymethyl)pyrimidine. Residues glycine 166 and 186–187 (VS) each bind 2-[(2R,5Z)-2-carboxy-4-methylthiazol-5(2H)-ylidene]ethyl phosphate.

Belongs to the thiamine-phosphate synthase family. Requires Mg(2+) as cofactor.

It catalyses the reaction 2-[(2R,5Z)-2-carboxy-4-methylthiazol-5(2H)-ylidene]ethyl phosphate + 4-amino-2-methyl-5-(diphosphooxymethyl)pyrimidine + 2 H(+) = thiamine phosphate + CO2 + diphosphate. The enzyme catalyses 2-(2-carboxy-4-methylthiazol-5-yl)ethyl phosphate + 4-amino-2-methyl-5-(diphosphooxymethyl)pyrimidine + 2 H(+) = thiamine phosphate + CO2 + diphosphate. It carries out the reaction 4-methyl-5-(2-phosphooxyethyl)-thiazole + 4-amino-2-methyl-5-(diphosphooxymethyl)pyrimidine + H(+) = thiamine phosphate + diphosphate. Its pathway is cofactor biosynthesis; thiamine diphosphate biosynthesis; thiamine phosphate from 4-amino-2-methyl-5-diphosphomethylpyrimidine and 4-methyl-5-(2-phosphoethyl)-thiazole: step 1/1. Functionally, condenses 4-methyl-5-(beta-hydroxyethyl)thiazole monophosphate (THZ-P) and 2-methyl-4-amino-5-hydroxymethyl pyrimidine pyrophosphate (HMP-PP) to form thiamine monophosphate (TMP). This chain is Thiamine-phosphate synthase, found in Yersinia pestis (strain Pestoides F).